The primary structure comprises 382 residues: Neuropeptide Y receptor type 1 (382 aa).

Over 1 to 33 (MNSTSFSQVENHSIFCNFSENSQFLAFESDDCH) the chain is Extracellular. Residues Asn2, Asn11, and Asn17 are each glycosylated (N-linked (GlcNAc...) asparagine). The chain crosses the membrane as a helical span at residues 34 to 54 (LPLAMIFTLALAYGAVIILGV). The Cytoplasmic portion of the chain corresponds to 55 to 75 (TGNLALIMIILKQKEMRNVTN). Residues 76-96 (ILIVNLSFSDLLVAIMCLPFT) traverse the membrane as a helical segment. At 97–115 (FVYTLMDHWVFGEAMCKLN) the chain is on the extracellular side. Residues Cys112 and Cys197 are joined by a disulfide bond. The chain crosses the membrane as a helical span at residues 116 to 136 (PFVQCVSITVSIFSLVLIAVE). Residues 137–153 (RHQLIINPRGWRPNNRH) are Cytoplasmic-facing. Residues 154–174 (AYVGIAVIWVLAVVSSLPFLI) traverse the membrane as a helical segment. Residues 175-210 (YQVLTDEPFQNVTLDAFKDKYVCFDKFPSDSHRLSY) are Extracellular-facing. Asn185 is a glycosylation site (N-linked (GlcNAc...) asparagine). A helical transmembrane segment spans residues 211 to 231 (TTLLLMLQYFGPLCFIFICYF). The Cytoplasmic segment spans residues 232–259 (KIYIRLKRRNNMMDKMRDNKYRSSETKR). A helical transmembrane segment spans residues 260-280 (INIMLLSIVVAFAVCWLPLTI). Topologically, residues 281–298 (FNTVFDWNHQIIATCNHN) are extracellular. The helical transmembrane segment at 299–319 (LLFLLCHLTAMISTCVNPIFY) threads the bilayer. At 320–382 (GFLNKNFQRD…KINNDDNEKI (63 aa)) the chain is on the cytoplasmic side. A lipid anchor (S-palmitoyl cysteine) is attached at Cys337. Ser367 is modified (phosphoserine).

It belongs to the G-protein coupled receptor 1 family.

The protein localises to the cell membrane. Receptor for neuropeptide Y and peptide YY. This chain is Neuropeptide Y receptor type 1 (NPY1R), found in Canis lupus familiaris (Dog).